A 311-amino-acid polypeptide reads, in one-letter code: Bifunctional protein FolD (311 aa).

Residue 174–176 (GKG) participates in NADP(+) binding.

This sequence belongs to the tetrahydrofolate dehydrogenase/cyclohydrolase family. As to quaternary structure, homodimer.

The enzyme catalyses (6R)-5,10-methylene-5,6,7,8-tetrahydrofolate + NADP(+) = (6R)-5,10-methenyltetrahydrofolate + NADPH. It catalyses the reaction (6R)-5,10-methenyltetrahydrofolate + H2O = (6R)-10-formyltetrahydrofolate + H(+). The protein operates within one-carbon metabolism; tetrahydrofolate interconversion. Its function is as follows. Catalyzes the oxidation of 5,10-methylenetetrahydrofolate to 5,10-methenyltetrahydrofolate and then the hydrolysis of 5,10-methenyltetrahydrofolate to 10-formyltetrahydrofolate. The sequence is that of Bifunctional protein FolD from Pyrobaculum arsenaticum (strain DSM 13514 / JCM 11321 / PZ6).